The sequence spans 336 residues: Aldo-keto reductase str7 (336 aa).

Residue D57 coordinates NADP(+). The active-site Proton donor is Y62. H124 serves as a coordination point for substrate. NADP(+) is bound by residues S154–E155, Q174, S206–P220, and K283–N291.

The protein belongs to the aldo/keto reductase family. Aldo/keto reductase 2 subfamily.

Its pathway is mycotoxin biosynthesis. In terms of biological role, aldo-keto reductase; part of the gene cluster that mediates the biosynthesis of strobilurin A, an antifungal polyketide that contains a key beta-methoxyacrylate toxophore that targets the complex III of the mitochondrial electron transport chain. Strobilurin biosynthesis begins with construction of benzoyl CoA by step-wise elimination of ammonia from phenylalanine by the phenylalanine ammonia-lyase str11, oxygenation by str8 and retro-Claisen reaction to form benzoic acid, which is activated to its CoA thiolester benzoyl CoA by the dedicated CoA ligase str10. Benzoyl CoA forms the starter unit for the highly reducing polyketide synthase stpks1 that produces the polyketide prestrobilutin A. The FAD-dependent oxygenase str9 then catalyzes the key oxidative rearrangement responsible for the creation of the beta-methoxyacrylate toxophore. Str9 performs epoxidation of the 2,3 olefin of prestrobilutin A, followed by Meinwald rearrangement to furnish the aldehyde intermediate. Rapid enolization of the aldehyde intermediate would give the beta-methoxyacrylate skeleton and methylations catalyzed by str2 and str3 complete the synthesis and lead to the production of strobilurin A. The short-chain dehydrogenase stl2 and the dehydrogenase str4 play a role in the shunt pathway leading to the production of bolineol. The cluster encodes no obvious halogenase gene that could be involved in production of strobilurin B, nor any obvious dimethylallyl-transferase that could be involved in the production of strobilurin G. It is possible that unknown proteins encoded in, or near, the cluster (such as str1 or stl1) may form new classes of halogenases or dimethylally-transferases, or that the responsible genes are located elsewhere on the genome. Similarly, proteins encoded by str5/str6 hydrolases appear to have no chemical role in the biosynthesis of strobilurin A. Finally, no obvious self-resistance gene is found within the cluster. The chain is Aldo-keto reductase str7 from Strobilurus tenacellus.